The sequence spans 452 residues: Bifunctional protein GlmU (452 aa).

The segment at 1–226 (MNFSAVILAA…PIEVEGVNDR (226 aa)) is pyrophosphorylase. UDP-N-acetyl-alpha-D-glucosamine contacts are provided by residues 8–11 (LAAG), K22, Q73, 78–79 (GT), 100–102 (YGD), G137, E151, N166, and N224. Residue D102 participates in Mg(2+) binding. N224 lines the Mg(2+) pocket. The segment at 227–247 (AQLARLERAYQAAQAQKLLEQ) is linker. The interval 248-452 (GVMLRDPSRF…IANWQRPTKK (205 aa)) is N-acetyltransferase. UDP-N-acetyl-alpha-D-glucosamine is bound by residues R330 and K348. The active-site Proton acceptor is H360. Residues Y363 and N374 each contribute to the UDP-N-acetyl-alpha-D-glucosamine site. Acetyl-CoA contacts are provided by residues A377, 383–384 (NY), S402, A420, and R437.

In the N-terminal section; belongs to the N-acetylglucosamine-1-phosphate uridyltransferase family. This sequence in the C-terminal section; belongs to the transferase hexapeptide repeat family. As to quaternary structure, homotrimer. Mg(2+) is required as a cofactor.

It is found in the cytoplasm. The enzyme catalyses alpha-D-glucosamine 1-phosphate + acetyl-CoA = N-acetyl-alpha-D-glucosamine 1-phosphate + CoA + H(+). It catalyses the reaction N-acetyl-alpha-D-glucosamine 1-phosphate + UTP + H(+) = UDP-N-acetyl-alpha-D-glucosamine + diphosphate. It functions in the pathway nucleotide-sugar biosynthesis; UDP-N-acetyl-alpha-D-glucosamine biosynthesis; N-acetyl-alpha-D-glucosamine 1-phosphate from alpha-D-glucosamine 6-phosphate (route II): step 2/2. The protein operates within nucleotide-sugar biosynthesis; UDP-N-acetyl-alpha-D-glucosamine biosynthesis; UDP-N-acetyl-alpha-D-glucosamine from N-acetyl-alpha-D-glucosamine 1-phosphate: step 1/1. It participates in bacterial outer membrane biogenesis; LPS lipid A biosynthesis. Catalyzes the last two sequential reactions in the de novo biosynthetic pathway for UDP-N-acetylglucosamine (UDP-GlcNAc). The C-terminal domain catalyzes the transfer of acetyl group from acetyl coenzyme A to glucosamine-1-phosphate (GlcN-1-P) to produce N-acetylglucosamine-1-phosphate (GlcNAc-1-P), which is converted into UDP-GlcNAc by the transfer of uridine 5-monophosphate (from uridine 5-triphosphate), a reaction catalyzed by the N-terminal domain. This chain is Bifunctional protein GlmU, found in Aliivibrio fischeri (strain MJ11) (Vibrio fischeri).